Consider the following 190-residue polypeptide: Elongation factor P-like protein (190 aa).

It belongs to the elongation factor P family.

The chain is Elongation factor P-like protein from Proteus mirabilis (strain HI4320).